Here is a 151-residue protein sequence, read N- to C-terminus: Ribonuclease H (151 aa).

The RNase H type-1 domain occupies 1 to 143; the sequence is MSDVVVIHTD…ADVLATRGLQ (143 aa). The Mg(2+) site is built by Asp-10, Glu-49, Asp-71, and Asp-135.

The protein belongs to the RNase H family. In terms of assembly, monomer. The cofactor is Mg(2+).

Its subcellular location is the cytoplasm. It catalyses the reaction Endonucleolytic cleavage to 5'-phosphomonoester.. Functionally, endonuclease that specifically degrades the RNA of RNA-DNA hybrids. In Mycolicibacterium gilvum (strain PYR-GCK) (Mycobacterium gilvum (strain PYR-GCK)), this protein is Ribonuclease H.